A 160-amino-acid polypeptide reads, in one-letter code: MGVTKKPDLNDPVLRAKLAKGMGHNYYGEPAWPNDLLYIFPVVILGTIACNVGLAVLEPSMIGEPADPFATPLEILPEWYFFPVFQILRTVPNKLLGVLLMVSVPAGLVTVPFLENVNKFQNPFRRPVATTVFLIGTAVSLWLGIGATLPIEKSLTLGLF.

The next 3 membrane-spanning stretches (helical) occupy residues 36-56 (LLYI…GLAV), 95-115 (LLGV…PFLE), and 131-151 (TVFL…TLPI).

This sequence belongs to the cytochrome b family. PetD subfamily. The 4 large subunits of the cytochrome b6-f complex are cytochrome b6, subunit IV (17 kDa polypeptide, petD), cytochrome f and the Rieske protein, while the 4 small subunits are petG, petL, petM and petN. The complex functions as a dimer.

The protein resides in the plastid. It is found in the chloroplast thylakoid membrane. Component of the cytochrome b6-f complex, which mediates electron transfer between photosystem II (PSII) and photosystem I (PSI), cyclic electron flow around PSI, and state transitions. The sequence is that of Cytochrome b6-f complex subunit 4 from Lotus japonicus (Lotus corniculatus var. japonicus).